The sequence spans 95 residues: Protein TusB (95 aa).

It belongs to the DsrH/TusB family. In terms of assembly, heterohexamer, formed by a dimer of trimers. The hexameric TusBCD complex contains 2 copies each of TusB, TusC and TusD. The TusBCD complex interacts with TusE.

The protein localises to the cytoplasm. Functionally, part of a sulfur-relay system required for 2-thiolation of 5-methylaminomethyl-2-thiouridine (mnm(5)s(2)U) at tRNA wobble positions. The sequence is that of Protein TusB from Sodalis glossinidius (strain morsitans).